Consider the following 136-residue polypeptide: Nuclear receptor 2C2-associated protein (136 aa).

This sequence belongs to the NR2C2AP family.

The protein localises to the nucleus. Its function is as follows. May act as a repressor of nr2c2-mediated transactivation by suppressing the binding between nr2c2 and its response element in target genes. In Xenopus laevis (African clawed frog), this protein is Nuclear receptor 2C2-associated protein (nr2c2ap).